A 762-amino-acid polypeptide reads, in one-letter code: Polyribonucleotide nucleotidyltransferase (762 aa).

Residues D531 and D537 each contribute to the Mg(2+) site. One can recognise a KH domain in the interval 597-656; it reads PRVTTIKVPVDKIGEVIGPKGKVINSITEETRAQISIEDDGTVFVGATDGPSAQAAIDKI. The S1 motif domain maps to 668-737; it reads GERFLGTVVK…KRGKISLVLV (70 aa).

The protein belongs to the polyribonucleotide nucleotidyltransferase family. Requires Mg(2+) as cofactor.

It localises to the cytoplasm. The enzyme catalyses RNA(n+1) + phosphate = RNA(n) + a ribonucleoside 5'-diphosphate. Functionally, involved in mRNA degradation. Catalyzes the phosphorolysis of single-stranded polyribonucleotides processively in the 3'- to 5'-direction. The polypeptide is Polyribonucleotide nucleotidyltransferase (Mycobacterium ulcerans (strain Agy99)).